Reading from the N-terminus, the 137-residue chain is Small ribosomal subunit protein bS6 (137 aa).

Belongs to the bacterial ribosomal protein bS6 family.

Binds together with bS18 to 16S ribosomal RNA. The chain is Small ribosomal subunit protein bS6 from Sulfurimonas denitrificans (strain ATCC 33889 / DSM 1251) (Thiomicrospira denitrificans (strain ATCC 33889 / DSM 1251)).